Consider the following 639-residue polypeptide: ATP-dependent rRNA helicase spb4 (639 aa).

The Q motif signature appears at 14–42 (WDAVTPPLSEWVLEAMSSMGFARMTPVQA). A Helicase ATP-binding domain is found at 45 to 249 (IPLFMAHKDV…RVGLRNPVKI (205 aa)). 58 to 65 (AVTGSGKT) is a binding site for ATP. The DEAD box motif lies at 197–200 (DEAD). The region spanning 283–437 (ALKNILSSVQ…SISFSDADAT (155 aa)) is the Helicase C-terminal domain. Disordered stretches follow at residues 531-601 (RKEL…ETKE) and 620-639 (AAKA…KGFD). Residues 561–624 (QNAENKNKKL…RFRQAAAKAE (64 aa)) adopt a coiled-coil conformation. Over residues 577–601 (KLKQEKTKWENMTEEERQKARETKE) the composition is skewed to basic and acidic residues.

It belongs to the DEAD box helicase family. DDX55/SPB4 subfamily. As to quaternary structure, component of pre-60S ribosomal complexes.

It is found in the nucleus. The protein localises to the nucleolus. It catalyses the reaction ATP + H2O = ADP + phosphate + H(+). Its function is as follows. ATP-binding RNA helicase involved in the biogenesis of 60S ribosomal subunits. Binds 90S pre-ribosomal particles and dissociates from pre-60S ribosomal particles after processing of 27SB pre-rRNA. Required for the normal formation of 18S rRNA through the processing of pre-rRNAs at sites A0, A1 and A2, and the normal formation of 25S and 5.8S rRNAs through the processing of pre-rRNAs at sites C1 and C2. This Aspergillus clavatus (strain ATCC 1007 / CBS 513.65 / DSM 816 / NCTC 3887 / NRRL 1 / QM 1276 / 107) protein is ATP-dependent rRNA helicase spb4.